The sequence spans 332 residues: Glyceraldehyde-3-phosphate dehydrogenase 2 (332 aa).

NAD(+) contacts are provided by Arg-11, Ile-12, and Asp-33. Glycyl lysine isopeptide (Lys-Gly) (interchain with G-Cter in ubiquitin) cross-links involve residues Lys-46 and Lys-63. Thr-120 lines the NAD(+) pocket. Residues 149–151 (SCT), Thr-180, 209–210 (TG), and Arg-232 contribute to the D-glyceraldehyde 3-phosphate site. Residue Cys-150 is the Nucleophile of the active site. Residue Ser-302 is modified to Phosphoserine. The NAD(+) site is built by Asn-314 and Tyr-318.

It belongs to the glyceraldehyde-3-phosphate dehydrogenase family. As to quaternary structure, homotetramer.

The protein resides in the cytoplasm. The enzyme catalyses D-glyceraldehyde 3-phosphate + phosphate + NAD(+) = (2R)-3-phospho-glyceroyl phosphate + NADH + H(+). It carries out the reaction NADH + H2O = (6R)-NADHX. The catalysed reaction is NADH + H2O = (6S)-NADHX. It catalyses the reaction NADPH + H2O = (6R)-NADPHX. The enzyme catalyses NADPH + H2O = (6S)-NADPHX. It participates in carbohydrate degradation; glycolysis; pyruvate from D-glyceraldehyde 3-phosphate: step 1/5. Functionally, glyceraldehyde-3-phosphate dehydrogenase (GAPDH) involved in glycolysis and gluconeogenesis. Catalyzes the reaction of glyceraldehyde-3-phosphate to 1,3 bis-phosphoglycerate. The contribution of the TDH1, TDH2, and TDH3 to the total glyceraldehyde-3-phosphate dehydrogenase activity is 10-15, 25-30, and 50-60%, respectively. In terms of biological role, as a side activity, catalyzes the hydration of the nicotinamide ring of NADH or NADPH at the C6 position to give the corresponding hydrates, NADHX and NADPHX, which exist as R and S epimers, that cannot act as electron donors or acceptors and inhibit several dehydrogenases, making them toxic. The chain is Glyceraldehyde-3-phosphate dehydrogenase 2 from Saccharomyces cerevisiae (strain ATCC 204508 / S288c) (Baker's yeast).